Here is a 158-residue protein sequence, read N- to C-terminus: Large ribosomal subunit protein uL11 (158 aa).

The protein belongs to the universal ribosomal protein uL11 family. Part of the ribosomal stalk of the 50S ribosomal subunit. Interacts with L10 and the large rRNA to form the base of the stalk. L10 forms an elongated spine to which L12 dimers bind in a sequential fashion forming a multimeric L10(L12)X complex.

Its function is as follows. Forms part of the ribosomal stalk which helps the ribosome interact with GTP-bound translation factors. The protein is Large ribosomal subunit protein uL11 of Methanosphaerula palustris (strain ATCC BAA-1556 / DSM 19958 / E1-9c).